We begin with the raw amino-acid sequence, 1577 residues long: High molecular weight form of myosin-1 (1577 aa).

One can recognise a Myosin motor domain in the interval 75–751; that stretch reads KSVDDLVQMD…EQRGLELQRN (677 aa). At Lys-119 the chain carries N6,N6,N6-trimethyllysine. Position 168–175 (168–175) interacts with ATP; that stretch reads GESGAGKT. Actin-binding stretches follow at residues 628-650 and 730-744; these read LDSL…KPNS and QVGK…PEQR. The 28-residue stretch at 755-782 folds into the IQ domain; the sequence is ERVTIQIQAGVRRMFARRLYKRMRAIKP. Positions 1261-1401 constitute a MyTH4 domain; sequence WTKSPIPTSL…PNVEQILAAK (141 aa). 2 disordered regions span residues 1442–1466 and 1483–1516; these read SRPA…QQAA and QQQQ…LPAE. Low complexity-rich tracts occupy residues 1444-1466 and 1483-1497; these read PAQA…QQAA and QQQQ…QQQA. One can recognise an SH3 domain in the interval 1519 to 1577; that stretch reads EEYKQVEVVYDYDGGGDAQRLVLVKGAIITVIKEYEGWAYGSTDDGQVGLYPINYTRPI.

It belongs to the TRAFAC class myosin-kinesin ATPase superfamily. Myosin family. In terms of assembly, myosin I heavy chain is single-headed.

This is High molecular weight form of myosin-1 from Acanthamoeba castellanii (Amoeba).